A 140-amino-acid chain; its full sequence is Large-conductance mechanosensitive channel (140 aa).

2 helical membrane passes run 16 to 36 and 84 to 104; these read VIDL…VTAL and INTV…VKLI.

The protein belongs to the MscL family. In terms of assembly, homopentamer.

The protein resides in the cell inner membrane. Its function is as follows. Channel that opens in response to stretch forces in the membrane lipid bilayer. May participate in the regulation of osmotic pressure changes within the cell. The protein is Large-conductance mechanosensitive channel of Xanthomonas oryzae pv. oryzae (strain PXO99A).